The chain runs to 270 residues: Formamidopyrimidine-DNA glycosylase (270 aa).

The active-site Schiff-base intermediate with DNA is P2. E3 functions as the Proton donor in the catalytic mechanism. K59 acts as the Proton donor; for beta-elimination activity in catalysis. DNA is bound by residues H91, R110, and K151. The segment at 236–270 (RVYGRDKEPCVTCGQQVKSKVLGGRNTFWCSRCQK) adopts an FPG-type zinc-finger fold. The active-site Proton donor; for delta-elimination activity is the R260.

Belongs to the FPG family. Monomer. Zn(2+) serves as cofactor.

It carries out the reaction Hydrolysis of DNA containing ring-opened 7-methylguanine residues, releasing 2,6-diamino-4-hydroxy-5-(N-methyl)formamidopyrimidine.. The enzyme catalyses 2'-deoxyribonucleotide-(2'-deoxyribose 5'-phosphate)-2'-deoxyribonucleotide-DNA = a 3'-end 2'-deoxyribonucleotide-(2,3-dehydro-2,3-deoxyribose 5'-phosphate)-DNA + a 5'-end 5'-phospho-2'-deoxyribonucleoside-DNA + H(+). In terms of biological role, involved in base excision repair of DNA damaged by oxidation or by mutagenic agents. Acts as a DNA glycosylase that recognizes and removes damaged bases. Has a preference for oxidized purines, such as 7,8-dihydro-8-oxoguanine (8-oxoG). Has AP (apurinic/apyrimidinic) lyase activity and introduces nicks in the DNA strand. Cleaves the DNA backbone by beta-delta elimination to generate a single-strand break at the site of the removed base with both 3'- and 5'-phosphates. The protein is Formamidopyrimidine-DNA glycosylase of Bdellovibrio bacteriovorus (strain ATCC 15356 / DSM 50701 / NCIMB 9529 / HD100).